The sequence spans 488 residues: UDP-N-acetylmuramate--L-alanine ligase (488 aa).

Residue 127-133 participates in ATP binding; the sequence is GTHGKTT.

It belongs to the MurCDEF family.

The protein localises to the cytoplasm. The enzyme catalyses UDP-N-acetyl-alpha-D-muramate + L-alanine + ATP = UDP-N-acetyl-alpha-D-muramoyl-L-alanine + ADP + phosphate + H(+). It functions in the pathway cell wall biogenesis; peptidoglycan biosynthesis. Functionally, cell wall formation. The protein is UDP-N-acetylmuramate--L-alanine ligase of Shewanella sp. (strain ANA-3).